A 236-amino-acid polypeptide reads, in one-letter code: DCN1-like protein 5 (236 aa).

Phosphoserine occurs at positions 9, 40, and 47. The region spanning F45–K231 is the DCUN1 domain.

Part of a complex that contains DCUN1D5, CUL1 and RBX1; this interaction is bridged by CUL1. Interacts (via the DCUN1 domain) with the unneddylated cullins: interacts with CUL1, CUL2, CUL3, CUL4A, CUL4B and CUL5; these interactions promote the cullin neddylation and the identity of the cullin dictates the affinity of the interaction. Interacts (via DCUN1 domain) with UBE2M (N-terminally acetylated form) and probably with UBE2F (N-terminally acetylated form). May also interact with regulators or subunits of cullin-RING ligases such as RBX1, RNF7, ELOB and DDB1; these interactions are bridged by cullins. Interacts with CAND1; this interaction is bridged by cullins and strongly inhibits the neddylation of cullins. These CAND-cullin-DCNL complexes can only be neddylated in the presence of a substrate adapter. In terms of processing, phosphorylation at Ser-40 is independent of cullin's interaction. Phosphorylated in response to both TICAM1 and MYD88 dependent Toll-like receptor (TLR) pathway activation. Phosphorylated in response to IL1B stimulation.

It is found in the nucleus. The protein localises to the cytoplasm. Its subcellular location is the cytoskeleton. The protein resides in the spindle. Functionally, contributes to the neddylation of all cullins by transferring NEDD8 from N-terminally acetylated NEDD8-conjugating E2s enzyme to different cullin C-terminal domain-RBX complexes which is necessary for the activation of cullin-RING E3 ubiquitin ligases (CRLs). May play a role in DNA damage response and may participate in cell proliferation and anchorage-independent cell growth. The protein is DCN1-like protein 5 (DCUN1D5) of Bos taurus (Bovine).